Consider the following 427-residue polypeptide: Trigger factor (427 aa).

One can recognise a PPIase FKBP-type domain in the interval 163–248 (GDVVNLDFDG…INEVKSKEVP (86 aa)).

Belongs to the FKBP-type PPIase family. Tig subfamily.

It localises to the cytoplasm. It carries out the reaction [protein]-peptidylproline (omega=180) = [protein]-peptidylproline (omega=0). Involved in protein export. Acts as a chaperone by maintaining the newly synthesized protein in an open conformation. Functions as a peptidyl-prolyl cis-trans isomerase. This chain is Trigger factor, found in Macrococcus caseolyticus (strain JCSC5402) (Macrococcoides caseolyticum).